The following is a 361-amino-acid chain: Peptide chain release factor 1 (361 aa).

N5-methylglutamine is present on Gln-235. A disordered region spans residues 284–306 (SQQATAEAMTRKLQVGSGDRSQR).

The protein belongs to the prokaryotic/mitochondrial release factor family. In terms of processing, methylated by PrmC. Methylation increases the termination efficiency of RF1.

The protein resides in the cytoplasm. In terms of biological role, peptide chain release factor 1 directs the termination of translation in response to the peptide chain termination codons UAG and UAA. In Xylella fastidiosa (strain 9a5c), this protein is Peptide chain release factor 1.